The sequence spans 1220 residues: DNA-directed RNA polymerase subunit beta' (1220 aa).

Zn(2+)-binding residues include Cys-60, Cys-62, Cys-75, and Cys-78. Mg(2+) contacts are provided by Asp-449, Asp-451, and Asp-453. Zn(2+)-binding residues include Cys-818, Cys-892, Cys-899, and Cys-902.

The protein belongs to the RNA polymerase beta' chain family. In terms of assembly, the RNAP catalytic core consists of 2 alpha, 1 beta, 1 beta' and 1 omega subunit. When a sigma factor is associated with the core the holoenzyme is formed, which can initiate transcription. Mg(2+) is required as a cofactor. The cofactor is Zn(2+).

The catalysed reaction is RNA(n) + a ribonucleoside 5'-triphosphate = RNA(n+1) + diphosphate. DNA-dependent RNA polymerase catalyzes the transcription of DNA into RNA using the four ribonucleoside triphosphates as substrates. This is DNA-directed RNA polymerase subunit beta' from Lacticaseibacillus casei (strain BL23) (Lactobacillus casei).